The chain runs to 105 residues: Delta-hexatoxin-Mg1a (105 aa).

The first 18 residues, 1–18, serve as a signal peptide directing secretion; the sequence is MKTLVIACVALVLVVVHG. The propeptide occupies 19 to 60; that stretch reads EVIEEVNEKQLQESVEEKYSLLQRLEKLDEAITAEENRNSRV. 4 cysteine pairs are disulfide-bonded: Cys63/Cys77, Cys70/Cys82, Cys76/Cys93, and Cys78/Cys105.

Belongs to the neurotoxin 06 (delta-actx) family. In terms of tissue distribution, expressed by the venom gland.

It localises to the secreted. Functionally, selectively slows channel inactivation of mammalian Nav1.1/SCN1A, Nav1.3/SCN3A, and Nav1.6/SCN8A and shows higher affinity for insect Nav1/para channels (site 3). Induces tonic repetitive firing of nerve impulses in insect neurons accompanied by plateau potentials. The protein is Delta-hexatoxin-Mg1a of Macrothele gigas (Japanese funnel web spider).